The following is a 672-amino-acid chain: Acetyl-coenzyme A synthetase (672 aa).

CoA is bound by residues 217–220 and threonine 335; that span reads RRGK. ATP contacts are provided by residues 411 to 413, 435 to 440, aspartate 529, arginine 544, and arginine 555; these read GEP and DTWWQT. Residues valine 566, histidine 568, and isoleucine 571 each coordinate Mg(2+). Arginine 613 provides a ligand contact to CoA. Lysine 638 is subject to N6-acetyllysine.

The protein belongs to the ATP-dependent AMP-binding enzyme family. Requires Mg(2+) as cofactor. Post-translationally, acetylated. Deacetylation by the SIR2-homolog deacetylase activates the enzyme. The N-terminus is blocked.

The catalysed reaction is acetate + ATP + CoA = acetyl-CoA + AMP + diphosphate. In terms of biological role, catalyzes the conversion of acetate into acetyl-CoA (AcCoA), an essential intermediate at the junction of anabolic and catabolic pathways. AcsA undergoes a two-step reaction. In the first half reaction, AcsA combines acetate with ATP to form acetyl-adenylate (AcAMP) intermediate. In the second half reaction, it can then transfer the acetyl group from AcAMP to the sulfhydryl group of CoA, forming the product AcCoA. The polypeptide is Acetyl-coenzyme A synthetase (Methanothrix soehngenii (Methanosaeta concilii)).